A 274-amino-acid polypeptide reads, in one-letter code: Glucosamine-6-phosphate deaminase (274 aa).

Residue D71 is the Proton acceptor; for enolization step of the active site. The active-site For ring-opening step is D140. Residue H142 is the Proton acceptor; for ring-opening step of the active site. E147 acts as the For ring-opening step in catalysis.

This sequence belongs to the glucosamine/galactosamine-6-phosphate isomerase family. NagB subfamily.

It catalyses the reaction alpha-D-glucosamine 6-phosphate + H2O = beta-D-fructose 6-phosphate + NH4(+). Its pathway is amino-sugar metabolism; N-acetylneuraminate degradation; D-fructose 6-phosphate from N-acetylneuraminate: step 5/5. Its function is as follows. Catalyzes the reversible isomerization-deamination of glucosamine 6-phosphate (GlcN6P) to form fructose 6-phosphate (Fru6P) and ammonium ion. This is Glucosamine-6-phosphate deaminase from Fusobacterium nucleatum subsp. nucleatum (strain ATCC 25586 / DSM 15643 / BCRC 10681 / CIP 101130 / JCM 8532 / KCTC 2640 / LMG 13131 / VPI 4355).